Here is a 537-residue protein sequence, read N- to C-terminus: RNA polymerase sigma-54 factor 2 (537 aa).

Residues 52–90 are disordered; that stretch reads ANDEASGGEAPAEAGQFSDSDGGHNDEPGGGPGEAFEPG. Residues 55–66 show a composition bias toward low complexity; sequence EASGGEAPAEAG. The segment at residues 403–422 is a DNA-binding region (H-T-H motif); it reads NLKAVADAIQMHESTVSRVT. The short motif at 492-500 is the RPON box element; sequence ARRTVAKYR. The tract at residues 507–537 is disordered; the sequence is SSVQRRRDKQSALGNVLSTAMSDRSRNPEPA. Polar residues predominate over residues 518–528; sequence ALGNVLSTAMS.

Belongs to the sigma-54 factor family.

Functionally, sigma factors are initiation factors that promote the attachment of RNA polymerase to specific initiation sites and are then released. This sigma factor is responsible for the expression of the nitrogen fixation genes. The polypeptide is RNA polymerase sigma-54 factor 2 (rpoN2) (Bradyrhizobium diazoefficiens (strain JCM 10833 / BCRC 13528 / IAM 13628 / NBRC 14792 / USDA 110)).